We begin with the raw amino-acid sequence, 177 residues long: MATNYSANQYEKAFSSKYLQNWSPTKPTKESISSHEGYTQIIANDRGHLLPSVPRSKANPWGSFMGTWQMPLKIPPARVTLTSRTTAGAASLTKWIQKNPDLLKASNGLCPEILGKPHDPDSQKKLRKKSITKTVQQARSPTIIPSSPAANLNSPDELQSSHPSAGHTPGPQRPAKS.

The disordered stretch occupies residues 113 to 177 (ILGKPHDPDS…TPGPQRPAKS (65 aa)). Positions 115–124 (GKPHDPDSQK) are enriched in basic and acidic residues. Residues 132–163 (TKTVQQARSPTIIPSSPAANLNSPDELQSSHP) show a composition bias toward polar residues.

This sequence belongs to the Flattop family. As to quaternary structure, microtubule inner protein component of sperm flagellar doublet microtubules. Interacts with DLG3. In terms of tissue distribution, expressed in airway epithelial cells.

Its subcellular location is the cytoplasm. It localises to the cytoskeleton. The protein localises to the cilium basal body. It is found in the cell projection. The protein resides in the cilium. Its subcellular location is the apical cell membrane. It localises to the cilium axoneme. The protein localises to the flagellum axoneme. In terms of biological role, microtubule inner protein (MIP) part of the dynein-decorated doublet microtubules (DMTs) in cilia axoneme. Acts as a regulator of cilium basal body docking and positioning in mono- and multiciliated cells. Regulates basal body docking and cilia formation in multiciliated lung cells. Regulates kinocilium positioning and stereocilia bundle morphogenesis in the inner ear. This Homo sapiens (Human) protein is Protein Flattop.